A 145-amino-acid chain; its full sequence is Large ribosomal subunit protein uL14m (145 aa).

A mitochondrion-targeting transit peptide spans 1–30; the sequence is MAFSSGLWGPCVHMSRAFSQRCFSTTGSLG.

Belongs to the universal ribosomal protein uL14 family. In terms of assembly, component of the mitochondrial ribosome large subunit (39S) which comprises a 16S rRNA and about 50 distinct proteins. Interacts with MALSU1.

Its subcellular location is the mitochondrion. Functionally, may form part of 2 intersubunit bridges in the assembled ribosome. Upon binding to MALSU1, intersubunit bridge formation is blocked, preventing ribosome formation and repressing translation. This is Large ribosomal subunit protein uL14m (MRPL14) from Bos taurus (Bovine).